A 488-amino-acid chain; its full sequence is UDP-N-acetylmuramoyl-L-alanyl-D-glutamate--2,6-diaminopimelate ligase (488 aa).

S31 is a binding site for UDP-N-acetyl-alpha-D-muramoyl-L-alanyl-D-glutamate. ATP is bound at residue 109 to 115; that stretch reads GTNGKTS. UDP-N-acetyl-alpha-D-muramoyl-L-alanyl-D-glutamate-binding positions include N150, 151-152, S178, and R186; that span reads TT. At K218 the chain carries N6-carboxylysine. Meso-2,6-diaminopimelate-binding positions include R384, 408-411, G458, and E462; that span reads DNPR. A Meso-diaminopimelate recognition motif motif is present at residues 408 to 411; that stretch reads DNPR.

The protein belongs to the MurCDEF family. MurE subfamily. Requires Mg(2+) as cofactor. Post-translationally, carboxylation is probably crucial for Mg(2+) binding and, consequently, for the gamma-phosphate positioning of ATP.

Its subcellular location is the cytoplasm. The enzyme catalyses UDP-N-acetyl-alpha-D-muramoyl-L-alanyl-D-glutamate + meso-2,6-diaminopimelate + ATP = UDP-N-acetyl-alpha-D-muramoyl-L-alanyl-gamma-D-glutamyl-meso-2,6-diaminopimelate + ADP + phosphate + H(+). It participates in cell wall biogenesis; peptidoglycan biosynthesis. Its function is as follows. Catalyzes the addition of meso-diaminopimelic acid to the nucleotide precursor UDP-N-acetylmuramoyl-L-alanyl-D-glutamate (UMAG) in the biosynthesis of bacterial cell-wall peptidoglycan. This chain is UDP-N-acetylmuramoyl-L-alanyl-D-glutamate--2,6-diaminopimelate ligase, found in Bacillus licheniformis (strain ATCC 14580 / DSM 13 / JCM 2505 / CCUG 7422 / NBRC 12200 / NCIMB 9375 / NCTC 10341 / NRRL NRS-1264 / Gibson 46).